The primary structure comprises 231 residues: Large ribosomal subunit protein uL1 (231 aa).

It belongs to the universal ribosomal protein uL1 family. As to quaternary structure, part of the 50S ribosomal subunit.

Functionally, binds directly to 23S rRNA. The L1 stalk is quite mobile in the ribosome, and is involved in E site tRNA release. Protein L1 is also a translational repressor protein, it controls the translation of the L11 operon by binding to its mRNA. This is Large ribosomal subunit protein uL1 from Acidovorax ebreus (strain TPSY) (Diaphorobacter sp. (strain TPSY)).